Here is a 92-residue protein sequence, read N- to C-terminus: Conotoxin Mr15.2 (92 aa).

A signal peptide spans Met1–Phe20. Positions Asp21–Arg53 are excised as a propeptide. Residues Gly30–Ser49 form a disordered region.

Belongs to the conotoxin N superfamily. Post-translationally, contains 4 disulfide bonds. Expressed by the venom duct.

The protein localises to the secreted. In Conus marmoreus (Marble cone), this protein is Conotoxin Mr15.2.